A 237-amino-acid chain; its full sequence is Urease subunit alpha (237 aa).

The urease gamma stretch occupies residues 1 to 102 (MKLTPKELDK…LVTIHTPVED (102 aa)). The urease beta stretch occupies residues 103–237 (NGKLAPGEVF…CGCEATKDKQ (135 aa)).

It in the N-terminal section; belongs to the urease gamma subunit family. In the C-terminal section; belongs to the urease beta subunit family. As to quaternary structure, heterohexamer of 3 UreA (alpha) and 3 UreB (beta) subunits.

It is found in the cytoplasm. It catalyses the reaction urea + 2 H2O + H(+) = hydrogencarbonate + 2 NH4(+). Its pathway is nitrogen metabolism; urea degradation; CO(2) and NH(3) from urea (urease route): step 1/1. The sequence is that of Urease subunit alpha from Helicobacter felis.